The chain runs to 547 residues: uncharacterized protein (547 aa).

The next 12 membrane-spanning stretches (helical) occupy residues 33 to 53 (PTFF…IMVI), 107 to 127 (PLIV…GVIF), 145 to 165 (TGLI…LSFA), 203 to 223 (VYIL…FYLA), 231 to 251 (FIAI…FLLV), 263 to 283 (VAGI…LIYL), 298 to 318 (LNKI…ASFF), 351 to 371 (TLLT…FGLL), 397 to 417 (TVII…VAFG), 432 to 452 (LDLA…VATG), 470 to 490 (IVSL…FQAI), and 499 to 519 (VFIW…IAFG).

The protein resides in the cell membrane. This is an uncharacterized protein from Mycoplasma genitalium (strain ATCC 33530 / DSM 19775 / NCTC 10195 / G37) (Mycoplasmoides genitalium).